Here is a 269-residue protein sequence, read N- to C-terminus: Phosphate import ATP-binding protein PstB 2 (269 aa).

The region spanning 22-264 is the ABC transporter domain; the sequence is LSTNDLRVFY…PSLQSTEDYV (243 aa). Position 55-62 (55-62) interacts with ATP; it reads GPSGSGKS.

This sequence belongs to the ABC transporter superfamily. Phosphate importer (TC 3.A.1.7) family. The complex is composed of two ATP-binding proteins (PstB), two transmembrane proteins (PstC and PstA) and a solute-binding protein (PstS).

The protein resides in the cell membrane. The catalysed reaction is phosphate(out) + ATP + H2O = ADP + 2 phosphate(in) + H(+). Functionally, part of the ABC transporter complex PstSACB involved in phosphate import. Responsible for energy coupling to the transport system. The chain is Phosphate import ATP-binding protein PstB 2 from Lactococcus lactis subsp. lactis (strain IL1403) (Streptococcus lactis).